We begin with the raw amino-acid sequence, 280 residues long: Divalent cation/proton antiporter GDT1 (280 aa).

The Cytoplasmic portion of the chain corresponds to 1-3 (MGN). The chain crosses the membrane as a helical span at residues 4–24 (MIKKASLIALLPLFTAAAAAA). Topologically, residues 25–45 (TDAETSMESGSSSHLKSFLMS) are vacuolar. Residues 46–66 (VSMIGLSEIGDKTFLIAALMA) traverse the membrane as a helical segment. The Cytoplasmic segment spans residues 67-71 (MRHKR). Residues 72-92 (VLVFSAAATSLAIMTILSGVV) traverse the membrane as a helical segment. Residues 93 to 104 (GHSAVAFLSERY) lie on the Vacuolar side of the membrane. The helical transmembrane segment at 105-125 (TAFFAGILFLVFGYKLTMEGL) threads the bilayer. The Cytoplasmic portion of the chain corresponds to 126-183 (EMSKDAGVEEEMAEVEEEIAIKDMNQDMDDVEKGGDTAYDKQLKNASIGKKIVHRIRE). Residues 184–204 (LASFMFSPVWVQIFLMVFLGE) traverse the membrane as a helical segment. Residues 205–222 (LGDRSQISIIAMATDSDY) lie on the Vacuolar side of the membrane. Residues 223 to 243 (WYVIAGAVIGHAICSGLAVVG) form a helical membrane-spanning segment. At 244-255 (GKLLATRISIRT) the chain is on the cytoplasmic side. The chain crosses the membrane as a helical span at residues 256-276 (ITLASSLLFFIFALMYIYQAF). Over 277-280 (TTQD) the chain is Vacuolar.

Belongs to the GDT1 family.

It is found in the golgi apparatus. Its subcellular location is the cis-Golgi network membrane. The enzyme catalyses Ca(2+)(in) + n H(+)(out) = Ca(2+)(out) + n H(+)(in). It carries out the reaction Mn(2+)(in) + n H(+)(out) = Mn(2+)(out) + n H(+)(in). Functionally, divalent cation:proton antiporter that exchanges calcium or manganese ions for protons across the Golgi membrane. Mediates the reversible transport of calcium or manganese to the Golgi lumen driven by the proton gradient and possibly the membrane potential generated by V-ATPase. Provides calcium or manganese cofactors to resident Golgi enzymes and contributes to the maintenance of an acidic luminal Golgi pH required for proper functioning of the secretory pathway. The transport stoichiometry remains to be elucidated. The chain is Divalent cation/proton antiporter GDT1 from Saccharomyces cerevisiae (strain ATCC 204508 / S288c) (Baker's yeast).